Reading from the N-terminus, the 81-residue chain is ATP synthase subunit C, cyanelle (81 aa).

2 consecutive transmembrane segments (helical) span residues 7 to 27 (AASV…PGIG) and 57 to 77 (LAFM…LLFA).

It belongs to the ATPase C chain family. In terms of assembly, F-type ATPases have 2 components, F(1) - the catalytic core - and F(0) - the membrane proton channel. F(1) has five subunits: alpha(3), beta(3), gamma(1), delta(1), epsilon(1). F(0) has four main subunits: a(1), b(1), b'(1) and c(10-14). The alpha and beta chains form an alternating ring which encloses part of the gamma chain. F(1) is attached to F(0) by a central stalk formed by the gamma and epsilon chains, while a peripheral stalk is formed by the delta, b and b' chains.

The protein resides in the plastid. The protein localises to the cyanelle thylakoid membrane. F(1)F(0) ATP synthase produces ATP from ADP in the presence of a proton or sodium gradient. F-type ATPases consist of two structural domains, F(1) containing the extramembraneous catalytic core and F(0) containing the membrane proton channel, linked together by a central stalk and a peripheral stalk. During catalysis, ATP synthesis in the catalytic domain of F(1) is coupled via a rotary mechanism of the central stalk subunits to proton translocation. In terms of biological role, key component of the F(0) channel; it plays a direct role in translocation across the membrane. A homomeric c-ring of between 10-14 subunits forms the central stalk rotor element with the F(1) delta and epsilon subunits. In Cyanophora paradoxa, this protein is ATP synthase subunit C, cyanelle.